Here is a 143-residue protein sequence, read N- to C-terminus: Large ribosomal subunit protein uL15 (143 aa).

Basic residues-rich tracts occupy residues 1–13 and 23–38; these read MIRK…KQRG and KKHR…GNAG. Residues 1–38 form a disordered region; it reads MIRKSKKITKQRGSRTCGYGEAKKHRGAGHRGGRGNAG.

It belongs to the universal ribosomal protein uL15 family. In terms of assembly, part of the 50S ribosomal subunit.

Functionally, binds to the 23S rRNA. In Methanococcus vannielii, this protein is Large ribosomal subunit protein uL15.